Here is a 787-residue protein sequence, read N- to C-terminus: PAN2-PAN3 deadenylation complex subunit pan3 (787 aa).

The segment at 1–20 is disordered; that stretch reads MNSGLTPSPSPAVAAAGPAG. Residues 11-20 are compositionally biased toward low complexity; the sequence is PAVAAAGPAG. A C3H1-type zinc finger spans residues 23-51; sequence GSKLKFCRYYAKDRTCFYGDECQFLHDDQ. Disordered regions lie at residues 131 to 162, 179 to 210, and 226 to 291; these read EATY…AAHD, TMSQ…MSQS, and GGPT…PPST. 2 stretches are compositionally biased toward low complexity: residues 143 to 154 and 200 to 210; these read NSSSSPSLLNDS and STSRLSNMSQS. Positions 185–200 match the PABPC-interacting motif-2 (PAM-2) motif; sequence KTPNPTASEFIPKGGS. A compositionally biased stretch (polar residues) spans 265-290; sequence TPNPANYMVPTSASTPVTNSVSQPPS. The segment at 365–650 is pseudokinase domain; the sequence is QIDQADMPGV…SVNDIMPMIG (286 aa). Residues Arg422, 471-478, and 545-546 contribute to the ATP site; these read DFHAGSET and TK. Residues 651 to 689 adopt a coiled-coil conformation; it reads ARFYTQLDAAQMRNDVIEEDLAKEVQNGRLFRLLAKLGT. Residues 690–787 form a knob domain region; sequence INERPEFQKD…ELVAAANGQL (98 aa).

This sequence belongs to the protein kinase superfamily. PAN3 family. In terms of assembly, homodimer. Forms a heterotrimer with a catalytic subunit pan2 to form the poly(A)-nuclease (PAN) deadenylation complex. Interacts (via PAM-2 motif) with poly(A)-binding protein pabpc1 (via PABC domain), conferring substrate specificity of the enzyme complex. Interacts with the GW182 family proteins tnrc6a, tnrc6b and tnrc6c.

Its subcellular location is the cytoplasm. The protein resides in the P-body. Regulatory subunit of the poly(A)-nuclease (PAN) deadenylation complex, one of two cytoplasmic mRNA deadenylases involved in general and miRNA-mediated mRNA turnover. PAN specifically shortens poly(A) tails of RNA and the activity is stimulated by poly(A)-binding protein (PABP). PAN deadenylation is followed by rapid degradation of the shortened mRNA tails by the CCR4-NOT complex. Deadenylated mRNAs are then degraded by two alternative mechanisms, namely exosome-mediated 3'-5' exonucleolytic degradation, or deadenylation-dependent mRNA decaping and subsequent 5'-3' exonucleolytic degradation by XRN1. PAN3 acts as a positive regulator for PAN activity, recruiting the catalytic subunit PAN2 to mRNA via its interaction with RNA and PABP, and to miRNA targets via its interaction with GW182 family proteins. The polypeptide is PAN2-PAN3 deadenylation complex subunit pan3 (Xenopus tropicalis (Western clawed frog)).